Reading from the N-terminus, the 175-residue chain is ATP synthase subunit delta (175 aa).

Belongs to the ATPase delta chain family. F-type ATPases have 2 components, F(1) - the catalytic core - and F(0) - the membrane proton channel. F(1) has five subunits: alpha(3), beta(3), gamma(1), delta(1), epsilon(1). F(0) has three main subunits: a(1), b(2) and c(10-14). The alpha and beta chains form an alternating ring which encloses part of the gamma chain. F(1) is attached to F(0) by a central stalk formed by the gamma and epsilon chains, while a peripheral stalk is formed by the delta and b chains.

It is found in the cell inner membrane. Functionally, f(1)F(0) ATP synthase produces ATP from ADP in the presence of a proton or sodium gradient. F-type ATPases consist of two structural domains, F(1) containing the extramembraneous catalytic core and F(0) containing the membrane proton channel, linked together by a central stalk and a peripheral stalk. During catalysis, ATP synthesis in the catalytic domain of F(1) is coupled via a rotary mechanism of the central stalk subunits to proton translocation. In terms of biological role, this protein is part of the stalk that links CF(0) to CF(1). It either transmits conformational changes from CF(0) to CF(1) or is implicated in proton conduction. This Xylella fastidiosa (strain M12) protein is ATP synthase subunit delta.